The chain runs to 520 residues: Ribonuclease Y (520 aa).

Residues 4 to 24 (TMFTIISILLSLICLVVGYFV) form a helical membrane-spanning segment. Residues 210-273 (TVSVVNLPND…ETARIALDKL (64 aa)) enclose the KH domain. The HD domain occupies 336–429 (VLKHSIEVAH…VAAADALSAA (94 aa)).

The protein belongs to the RNase Y family.

It is found in the cell membrane. In terms of biological role, endoribonuclease that initiates mRNA decay. The protein is Ribonuclease Y of Bacillus pumilus (strain SAFR-032).